A 1274-amino-acid polypeptide reads, in one-letter code: VWFA and cache domain-containing protein 1 (1274 aa).

Positions 1-35 are cleaved as a signal peptide; sequence MARQPEEEETAVARARRPPLWLLCLVACWLLGAGA. Topologically, residues 36-1095 are extracellular; sequence EADFSILDEA…ITLNMIKSAP (1060 aa). A glycan (N-linked (GlcNAc...) asparagine) is linked at Asn-145. One can recognise a VWFA domain in the interval 228 to 443; the sequence is HIVVILDHGA…TTVGRFYTNL (216 aa). Cache domains are found at residues 453–532 and 772–853; these read FSLP…SEPP and LTGP…HPTL. The helical transmembrane segment at 1096–1116 threads the bilayer; the sequence is VGPVAGGIMGCIMVLVLAVYA. The Cytoplasmic segment spans residues 1117-1274; the sequence is YRHQIHRRSH…VTVHTVDAEC (158 aa). The tract at residues 1179–1227 is disordered; that stretch reads PERRRRYWGRSGTESDHGYSTMSPQEDSENPPCNNDPLSAGVDVGNHDE. Over residues 1196 to 1215 the composition is skewed to polar residues; sequence GYSTMSPQEDSENPPCNNDP.

It belongs to the calcium channel subunit alpha-2/delta family.

Its subcellular location is the membrane. Its function is as follows. May regulate voltage-dependent calcium channels. This Homo sapiens (Human) protein is VWFA and cache domain-containing protein 1 (CACHD1).